The primary structure comprises 932 residues: Glycine dehydrogenase (decarboxylating) (932 aa).

K685 carries the post-translational modification N6-(pyridoxal phosphate)lysine.

The protein belongs to the GcvP family. The glycine cleavage system is composed of four proteins: P, T, L and H. Pyridoxal 5'-phosphate is required as a cofactor.

It carries out the reaction N(6)-[(R)-lipoyl]-L-lysyl-[glycine-cleavage complex H protein] + glycine + H(+) = N(6)-[(R)-S(8)-aminomethyldihydrolipoyl]-L-lysyl-[glycine-cleavage complex H protein] + CO2. The glycine cleavage system catalyzes the degradation of glycine. The P protein binds the alpha-amino group of glycine through its pyridoxal phosphate cofactor; CO(2) is released and the remaining methylamine moiety is then transferred to the lipoamide cofactor of the H protein. The polypeptide is Glycine dehydrogenase (decarboxylating) (Brucella suis (strain ATCC 23445 / NCTC 10510)).